The primary structure comprises 116 residues: Aspartate 1-decarboxylase (116 aa).

Ser25 serves as the catalytic Schiff-base intermediate with substrate; via pyruvic acid. Pyruvic acid (Ser) is present on Ser25. Thr57 is a binding site for substrate. The active-site Proton donor is the Tyr58. 73–75 (GAA) lines the substrate pocket.

The protein belongs to the PanD family. As to quaternary structure, heterooctamer of four alpha and four beta subunits. Pyruvate is required as a cofactor. In terms of processing, is synthesized initially as an inactive proenzyme, which is activated by self-cleavage at a specific serine bond to produce a beta-subunit with a hydroxyl group at its C-terminus and an alpha-subunit with a pyruvoyl group at its N-terminus.

It localises to the cytoplasm. The catalysed reaction is L-aspartate + H(+) = beta-alanine + CO2. The protein operates within cofactor biosynthesis; (R)-pantothenate biosynthesis; beta-alanine from L-aspartate: step 1/1. Catalyzes the pyruvoyl-dependent decarboxylation of aspartate to produce beta-alanine. This Syntrophus aciditrophicus (strain SB) protein is Aspartate 1-decarboxylase.